The sequence spans 712 residues: Matrix metalloproteinase-9 (712 aa).

The first 19 residues, 1–19, serve as a signal peptide directing secretion; sequence MSPLQPLVLALLVLACCSA. The propeptide at 20-106 is activation peptide; sequence VPRRRQPTVV…PRCGVPDVGR (87 aa). A glycan (N-linked (GlcNAc...) asparagine) is linked at asparagine 38. Positions 97–104 match the Cysteine switch motif; sequence PRCGVPDV. A Zn(2+)-binding site is contributed by cysteine 99. Residues asparagine 120 and asparagine 127 are each glycosylated (N-linked (GlcNAc...) asparagine). Positions 131 and 165 each coordinate Ca(2+). Positions 175 and 177 each coordinate Zn(2+). Ca(2+)-binding residues include aspartate 182, glycine 183, asparagine 185, and leucine 187. Zn(2+) is bound at residue histidine 190. The Ca(2+) site is built by glycine 197, glutamine 199, and aspartate 201. Residue histidine 203 coordinates Zn(2+). Ca(2+) is bound by residues aspartate 205, aspartate 206, and glutamate 208. 3 consecutive Fibronectin type-II domains span residues 225 to 273, 283 to 331, and 342 to 390; these read AKGA…FCPS, ADGK…FCPT, and AAGE…FCPD. 6 cysteine pairs are disulfide-bonded: cysteine 230–cysteine 256, cysteine 244–cysteine 271, cysteine 288–cysteine 314, cysteine 302–cysteine 329, cysteine 347–cysteine 373, and cysteine 361–cysteine 388. Histidine 401 provides a ligand contact to Zn(2+). Residue glutamate 402 is part of the active site. Histidine 405 and histidine 411 together coordinate Zn(2+). Residues 440–519 form a disordered region; sequence QHLYGPRPEP…PTESPDPAED (80 aa). A compositionally biased stretch (low complexity) spans 455 to 465; the sequence is TTTTTTTTEPQ. Residues 491-504 are compositionally biased toward pro residues; it reads TGPPAAGPTGPPTA. The segment covering 505–514 has biased composition (low complexity); the sequence is GPSAAPTESP. Cysteines 521 and 709 form a disulfide. Hemopexin repeat units follow at residues 523–568, 569–613, 615–662, and 663–709; these read VDIF…WPAL, PRKL…GLGP, VAQV…FPGV, and PIST…LLKC.

It belongs to the peptidase M10A family. In terms of assembly, exists as monomer or homodimer; disulfide-linked. Also exists as heterodimer with LCN2. Macrophages and transformed cell lines produce only the monomeric form. Interacts with ECM1. Zn(2+) is required as a cofactor. It depends on Ca(2+) as a cofactor. N- and O-glycosylated.

It is found in the secreted. Its subcellular location is the extracellular space. It localises to the extracellular matrix. It carries out the reaction Cleavage of gelatin types I and V and collagen types IV and V.. Matrix metalloproteinase that plays an essential role in local proteolysis of the extracellular matrix and in leukocyte migration. Could play a role in bone osteoclastic resorption. Cleaves KiSS1 at a Gly-|-Leu bond. Cleaves NINJ1 to generate the Secreted ninjurin-1 form. Cleaves type IV and type V collagen into large C-terminal three quarter fragments and shorter N-terminal one quarter fragments. Degrades fibronectin but not laminin or Pz-peptide. This chain is Matrix metalloproteinase-9, found in Bos taurus (Bovine).